The following is a 594-amino-acid chain: Membrane protein insertase YidC (594 aa).

Residues 7 to 27 traverse the membrane as a helical segment; sequence YFVAIALSVLILIAWQFFYVS. The segment at 36 to 73 is disordered; sequence AAEQAQQAQQTQQQPGAQPAAPGQALPGGAIPSAGESR. Residues 37–65 are compositionally biased toward low complexity; sequence AEQAQQAQQTQQQPGAQPAAPGQALPGGA. The next 4 membrane-spanning stretches (helical) occupy residues 369–389, 443–463, 488–508, and 532–552; these read LFGN…LIFF, WPIL…YVTI, LFGL…WPII, and FTWM…GLVI.

Belongs to the OXA1/ALB3/YidC family. Type 1 subfamily. In terms of assembly, interacts with the Sec translocase complex via SecD. Specifically interacts with transmembrane segments of nascent integral membrane proteins during membrane integration.

It localises to the cell inner membrane. In terms of biological role, required for the insertion and/or proper folding and/or complex formation of integral membrane proteins into the membrane. Involved in integration of membrane proteins that insert both dependently and independently of the Sec translocase complex, as well as at least some lipoproteins. Aids folding of multispanning membrane proteins. The polypeptide is Membrane protein insertase YidC (Rhizobium meliloti (strain 1021) (Ensifer meliloti)).